The chain runs to 664 residues: MNFRRDISALNEDIIVEQLLRSHDPDGRWLDSEMLLQEVETILSFVLQNDVSRPLLTENCITTIEVFDSKETLPYAIFRISVQMLCPCTGENEIRKRTMVLFDLLKEYRWDAKAVLVLGVLAATYGGLLLPVHLAICDPVAASIAKLNQLPIERTKFRPWLESLNLLIKAMVDVTKCIIKFEKIPFKQAKLDNNILGETLSNIYLTTYRVVKSALTCMQQIPYFKQTQQAKKSRKTAAELSIESRRAAGELSSLGYQLLNIHTRLNKQVEDCSTQIEEEINQRLRNINIETHQDNQDVLHLLFSLQDDLPLQQYSRQISITEVQDKVTLLLLSKPPVEPLFFLLQQLYDHPSNTNTEQNYEIIWVPIPSSQKWTDEEKEIFDFYSNSLPWISVRQPWLMSSTILNFFKQEWHYKDNEAMLVVIDSNGRFVNMNAMDMVLIWGVKAYPFSVSREDELWKEHGWSINLLLDGIHPTFEGREICIFGSENLDWIDEFVSLARKIQNLGFQLELIYLSNQRRDERAMEESSILFSPTLQQLFWLRLESIERSKLKRIVIEPSKPDRVFEEVRNLLDFDYGKHRGWGIIGNGSTAETVDGEKMTERMRKIVRWGEYAKGLGFTEAIEIAAEKPCELSHTAVVPFEEALTMKVVTCEKCKWPMKRFVAYQ.

The sequence is that of Protein SIEVE ELEMENT OCCLUSION C from Arabidopsis thaliana (Mouse-ear cress).